Consider the following 73-residue polypeptide: UPF0346 protein lp_1865 (73 aa).

It belongs to the UPF0346 family.

The sequence is that of UPF0346 protein lp_1865 from Lactiplantibacillus plantarum (strain ATCC BAA-793 / NCIMB 8826 / WCFS1) (Lactobacillus plantarum).